Consider the following 295-residue polypeptide: Nucleotide-binding protein BH3569 (295 aa).

Residue G14–T21 coordinates ATP. Position 65 to 68 (D65 to G68) interacts with GTP.

Belongs to the RapZ-like family.

Functionally, displays ATPase and GTPase activities. This Halalkalibacterium halodurans (strain ATCC BAA-125 / DSM 18197 / FERM 7344 / JCM 9153 / C-125) (Bacillus halodurans) protein is Nucleotide-binding protein BH3569.